The sequence spans 504 residues: Maturase K (504 aa).

It belongs to the intron maturase 2 family. MatK subfamily.

It is found in the plastid. The protein resides in the chloroplast. Usually encoded in the trnK tRNA gene intron. Probably assists in splicing its own and other chloroplast group II introns. This chain is Maturase K, found in Hamamelis japonica (Japanese witch hazel).